Consider the following 466-residue polypeptide: Glutamate--tRNA ligase 2 (466 aa).

Positions 9 to 19 match the 'HIGH' region motif; it reads PSPTGSLHLGG. Residues 236–240 carry the 'KMSKS' region motif; the sequence is KLSKR. Position 239 (lysine 239) interacts with ATP.

It belongs to the class-I aminoacyl-tRNA synthetase family. Glutamate--tRNA ligase type 1 subfamily. As to quaternary structure, monomer.

It localises to the cytoplasm. The enzyme catalyses tRNA(Glu) + L-glutamate + ATP = L-glutamyl-tRNA(Glu) + AMP + diphosphate. In terms of biological role, catalyzes the attachment of glutamate to tRNA(Glu) in a two-step reaction: glutamate is first activated by ATP to form Glu-AMP and then transferred to the acceptor end of tRNA(Glu). This is Glutamate--tRNA ligase 2 from Anaplasma marginale (strain St. Maries).